Here is a 293-residue protein sequence, read N- to C-terminus: Elongation factor Ts (293 aa).

Positions 80 to 83 (TDFV) are involved in Mg(2+) ion dislocation from EF-Tu.

It belongs to the EF-Ts family.

Its subcellular location is the cytoplasm. Its function is as follows. Associates with the EF-Tu.GDP complex and induces the exchange of GDP to GTP. It remains bound to the aminoacyl-tRNA.EF-Tu.GTP complex up to the GTP hydrolysis stage on the ribosome. The sequence is that of Elongation factor Ts from Staphylococcus aureus (strain USA300).